The sequence spans 889 residues: Mixed-linked glucan synthase 2 (889 aa).

The segment at 34 to 53 (AGADGQNGRRSPVAKRVNDG) is disordered. Transmembrane regions (helical) follow at residues 93-113 (ILHP…AFFA) and 123-143 (GVWL…SWVL). Residue Asp-213 is part of the active site. Residues 265 to 293 (ELMSDHRRVRREYEEFKVRIDSLSSTIRQ) are a coiled coil. 2 residues coordinate substrate: Asp-411 and Asp-413. Asp-579 is an active-site residue. Helical transmembrane passes span 655–675 (TYPI…MWLI), 685–705 (FGEY…IGMF), 723–743 (FYMI…ALKL), 777–797 (LLIP…VAVG), 811–831 (LAVL…PFAL), and 842–862 (AVLF…YVAF).

This sequence belongs to the glycosyltransferase 2 family. Plant cellulose synthase-like F subfamily.

It is found in the golgi apparatus membrane. Its function is as follows. Catalyzes both beta-1,3 and beta-1,4 glycosidic linkage on beta-D-glucan. Essential for (1,3;1,4)-beta-D-glucans synthesis in grasses and cereals (Poaceae). The mixed-linked glucans (which are not present in walls of dicotyledons or most other monocotyledonous plants) are particularly important constituents of the walls of the starchy endosperm and aleurone cells of cereal grains such as oats, wheat, rice and barley. They can account for up to 70% by weight of the wall. The protein is Mixed-linked glucan synthase 2 (CSLF2) of Oryza sativa subsp. japonica (Rice).